Here is a 393-residue protein sequence, read N- to C-terminus: Na(+)/H(+) antiporter NhaA 2 (393 aa).

The next 11 membrane-spanning stretches (helical) occupy residues 18–38 (SGGL…NSQL), 53–73 (LSVQ…MVGL), 91–111 (ILPG…YLAF), 120–140 (GWAI…SLLG), 149–169 (VFLA…IGLF), 172–192 (TGVS…LVAL), 208–228 (LVLW…GVLL), 263–283 (FIIV…GLGM), 294–314 (VAAG…LLLV), 332–352 (GTTL…LLAF), and 363–383 (IGIL…LRFS).

Belongs to the NhaA Na(+)/H(+) (TC 2.A.33) antiporter family.

It is found in the cell inner membrane. The enzyme catalyses Na(+)(in) + 2 H(+)(out) = Na(+)(out) + 2 H(+)(in). Na(+)/H(+) antiporter that extrudes sodium in exchange for external protons. The sequence is that of Na(+)/H(+) antiporter NhaA 2 from Brucella anthropi (strain ATCC 49188 / DSM 6882 / CCUG 24695 / JCM 21032 / LMG 3331 / NBRC 15819 / NCTC 12168 / Alc 37) (Ochrobactrum anthropi).